We begin with the raw amino-acid sequence, 479 residues long: Aspartyl/glutamyl-tRNA(Asn/Gln) amidotransferase subunit B (479 aa).

This sequence belongs to the GatB/GatE family. GatB subfamily. As to quaternary structure, heterotrimer of A, B and C subunits.

The enzyme catalyses L-glutamyl-tRNA(Gln) + L-glutamine + ATP + H2O = L-glutaminyl-tRNA(Gln) + L-glutamate + ADP + phosphate + H(+). It catalyses the reaction L-aspartyl-tRNA(Asn) + L-glutamine + ATP + H2O = L-asparaginyl-tRNA(Asn) + L-glutamate + ADP + phosphate + 2 H(+). Functionally, allows the formation of correctly charged Asn-tRNA(Asn) or Gln-tRNA(Gln) through the transamidation of misacylated Asp-tRNA(Asn) or Glu-tRNA(Gln) in organisms which lack either or both of asparaginyl-tRNA or glutaminyl-tRNA synthetases. The reaction takes place in the presence of glutamine and ATP through an activated phospho-Asp-tRNA(Asn) or phospho-Glu-tRNA(Gln). The sequence is that of Aspartyl/glutamyl-tRNA(Asn/Gln) amidotransferase subunit B from Streptococcus suis (strain 98HAH33).